We begin with the raw amino-acid sequence, 252 residues long: Carbohydrate deacetylase (252 aa).

Residues His59 and His122 each contribute to the Mg(2+) site.

It belongs to the YdjC deacetylase family. As to quaternary structure, homodimer. Mg(2+) serves as cofactor.

Functionally, probably catalyzes the deacetylation of acetylated carbohydrates an important step in the degradation of oligosaccharides. This is Carbohydrate deacetylase from Vibrio cholerae serotype O1 (strain ATCC 39541 / Classical Ogawa 395 / O395).